Here is a 330-residue protein sequence, read N- to C-terminus: MISFSSFYQQIADSTLQHWLEDLPAILGKWQREHKHGNLPKWEKVLNKLNYAEPDSVDFVDSVTIGSGSQLSAGQQQKLENLLRLFQPWRKGPFNVHGIDIDTEWRSDWKWQRVRQHISPLAKRTVLDVGCGSGYHMWRMLGDGAARVVGIDPSPLFLCQFEAIKRLAGNQHPVHLLPLGIEELPPLDAFDTVFSMGVLYHRRSPIDHLYQLRDQLRMGGELVLETLVIDGDENTVLVPEDRYGKMNNVWFLPSVAALMLWLKKCDFTNIRCVDVDTTSLAEQRSTTWMPNESLVDYLDPKDINLTIEGYPAPKRATIIATKNQPNFDLI.

Residues K91, W105, K110, G130, 152–154 (DPS), 181–182 (IE), M196, Y200, and R315 contribute to the carboxy-S-adenosyl-L-methionine site.

Belongs to the class I-like SAM-binding methyltransferase superfamily. CmoB family. Homotetramer.

It catalyses the reaction carboxy-S-adenosyl-L-methionine + 5-hydroxyuridine(34) in tRNA = 5-carboxymethoxyuridine(34) in tRNA + S-adenosyl-L-homocysteine + H(+). Catalyzes carboxymethyl transfer from carboxy-S-adenosyl-L-methionine (Cx-SAM) to 5-hydroxyuridine (ho5U) to form 5-carboxymethoxyuridine (cmo5U) at position 34 in tRNAs. This is tRNA U34 carboxymethyltransferase from Shewanella denitrificans (strain OS217 / ATCC BAA-1090 / DSM 15013).